We begin with the raw amino-acid sequence, 294 residues long: Phosphate acetyltransferase (294 aa).

Belongs to the phosphate acetyltransferase and butyryltransferase family. Homotetramer.

The protein resides in the cytoplasm. The catalysed reaction is acetyl-CoA + phosphate = acetyl phosphate + CoA. The protein operates within metabolic intermediate biosynthesis; acetyl-CoA biosynthesis; acetyl-CoA from acetate: step 2/2. Its function is as follows. In addition to acetyl-CoA (100%), the enzyme accepts propionyl-CoA (60%) and butyryl-CoA (30%). This is Phosphate acetyltransferase (pta) from Thermotoga maritima (strain ATCC 43589 / DSM 3109 / JCM 10099 / NBRC 100826 / MSB8).